The sequence spans 298 residues: ADP/ATP translocase 1 (298 aa).

The Mitochondrial intermembrane portion of the chain corresponds to Met-1 to Ser-7. Ser-2 is subject to N-acetylserine. One copy of the Solcar 1 repeat lies at Leu-6–Ile-98. Ser-7 is subject to Phosphoserine. A helical transmembrane segment spans residues Phe-8 to Gln-37. The Mitochondrial matrix portion of the chain corresponds to Val-38–Asn-74. Lys-52 carries the N6,N6,N6-trimethyllysine modification. Residues Leu-75–Phe-99 traverse the membrane as a helical segment. ADP contacts are provided by Arg-80 and Lys-92. Topologically, residues Leu-100–Phe-109 are mitochondrial intermembrane. Residues Trp-110–Phe-130 form a helical membrane-spanning segment. Solcar repeat units lie at residues Arg-111–Met-201 and Val-212–Tyr-297. Over Val-131–Asn-178 the chain is Mitochondrial matrix. Lys-147 bears the N6-succinyllysine mark. Cys-160 bears the S-nitrosocysteine mark. A helical membrane pass occupies residues Val-179–Lys-199. At Gly-200–Ile-210 the chain is on the mitochondrial intermembrane side. A helical transmembrane segment spans residues Ile-211 to Phe-231. Residues Asp-232–Gly-273 lie on the Mitochondrial matrix side of the membrane. Arg-235 provides a ligand contact to ADP. The tract at residues Arg-235–Met-240 is important for transport activity. Residues Arg-235–Met-240 carry the Nucleotide carrier signature motif motif. An N6-succinyllysine mark is found at Lys-245 and Lys-272. Residues Ala-274–Tyr-291 form a helical membrane-spanning segment. Over Asp-292 to Val-298 the chain is Mitochondrial intermembrane.

The protein belongs to the mitochondrial carrier (TC 2.A.29) family. In terms of assembly, monomer. Found in a complex with ARL2, ARL2BP and SLC25A4/ANT1. Interacts with ARL2BP. Interacts with TIMM44; leading to inhibit the presequence translocase TIMM23, thereby promoting stabilization of PINK1. In terms of processing, under cell death induction, transglutaminated by TGM2. Transglutamination leads to formation of covalent cross-links between a glutamine and the epsilon-amino group of a lysine residue, forming polymers.

It localises to the mitochondrion inner membrane. It is found in the membrane. It catalyses the reaction ADP(in) + ATP(out) = ADP(out) + ATP(in). The catalysed reaction is H(+)(in) = H(+)(out). With respect to regulation, the matrix-open state (m-state) is inhibited by the membrane-permeable bongkrekic acid (BKA). The cytoplasmic-open state (c-state) is inhibited by the membrane-impermeable toxic inhibitor carboxyatractyloside (CATR). Proton transporter activity is inhibited by ADP:ATP antiporter activity. ADP:ATP antiporter that mediates import of ADP into the mitochondrial matrix for ATP synthesis, and export of ATP out to fuel the cell. Cycles between the cytoplasmic-open state (c-state) and the matrix-open state (m-state): operates by the alternating access mechanism with a single substrate-binding site intermittently exposed to either the cytosolic (c-state) or matrix (m-state) side of the inner mitochondrial membrane. In addition to its ADP:ATP antiporter activity, also involved in mitochondrial uncoupling and mitochondrial permeability transition pore (mPTP) activity. Plays a role in mitochondrial uncoupling by acting as a proton transporter: proton transport uncouples the proton flows via the electron transport chain and ATP synthase to reduce the efficiency of ATP production and cause mitochondrial thermogenesis. Proton transporter activity is inhibited by ADP:ATP antiporter activity, suggesting that SLC25A4/ANT1 acts as a master regulator of mitochondrial energy output by maintaining a delicate balance between ATP production (ADP:ATP antiporter activity) and thermogenesis (proton transporter activity). Proton transporter activity requires free fatty acids as cofactor, but does not transport it. Probably mediates mitochondrial uncoupling in tissues that do not express UCP1. Also plays a key role in mPTP opening, a non-specific pore that enables free passage of the mitochondrial membranes to solutes of up to 1.5 kDa, and which contributes to cell death. It is however unclear if SLC25A4/ANT1 constitutes a pore-forming component of mPTP or regulates it. Acts as a regulator of mitophagy independently of ADP:ATP antiporter activity: promotes mitophagy via interaction with TIMM44, leading to inhibit the presequence translocase TIMM23, thereby promoting stabilization of PINK1. This chain is ADP/ATP translocase 1, found in Oryctolagus cuniculus (Rabbit).